The following is a 134-amino-acid chain: Ribosome-binding factor A (134 aa).

It belongs to the RbfA family. In terms of assembly, monomer. Binds 30S ribosomal subunits, but not 50S ribosomal subunits or 70S ribosomes.

The protein localises to the cytoplasm. One of several proteins that assist in the late maturation steps of the functional core of the 30S ribosomal subunit. Associates with free 30S ribosomal subunits (but not with 30S subunits that are part of 70S ribosomes or polysomes). Required for efficient processing of 16S rRNA. May interact with the 5'-terminal helix region of 16S rRNA. The sequence is that of Ribosome-binding factor A from Rhizobium leguminosarum bv. trifolii (strain WSM2304).